A 453-amino-acid polypeptide reads, in one-letter code: MASEVARHLLFQSHITTKTAHTSSQVSDHEQKQKDSPRSLTMSGHVGFESLPDQLVNRSIQQGFCFNILCVGETGIGKSTLIDTLFNTNFEDHESSHFYPHVRLKAQTYELQESNVRLKLTIVNTVGFGDQINKEESYQPIVDYIDAQFEAYLQEELKIKRSLFNYHDSRVHVCLYFISPTGHSLKTLDLLTMKSLDSKVNIIPVIAKADAISKTELQKFKIKLMSELVSNGVQIYQFPTDDETIAKINASMNGHLPFAVVGSMDEVKVGNKMVKARQYPWGVVQVENENHCDFVKLREMLICTNMEDLRDQTHTRHYELYRRRKLEEMGFMDVGPENQPLSLQETYEAKRHEFYGERQRKEEEMKQLFVQRVKEKEAILKEAERELQAKFEHLKRVHQEEKLRLEEKRRLLEEEIMAFSKKKATSEIYQNQTFMTPGSNLRKDKDRKNSNFM.

Positions 18–43 (KTAHTSSQVSDHEQKQKDSPRSLTMS) are disordered. Residues 27 to 37 (SDHEQKQKDSP) show a composition bias toward basic and acidic residues. The Septin-type G domain maps to 62-328 (QGFCFNILCV…ELYRRRKLEE (267 aa)). Positions 72-79 (GETGIGKS) are G1 motif. GTP contacts are provided by residues 72-79 (GETGIGKS), glycine 127, 208-216 (KADAISKTE), glycine 262, and arginine 277. The tract at residues 124–127 (NTVG) is G3 motif. Residues 207–210 (AKAD) are G4 motif. The interval 433–453 (TFMTPGSNLRKDKDRKNSNFM) is disordered. Basic and acidic residues predominate over residues 441 to 453 (LRKDKDRKNSNFM).

Belongs to the TRAFAC class TrmE-Era-EngA-EngB-Septin-like GTPase superfamily. Septin GTPase family. As to quaternary structure, septins polymerize into heterooligomeric protein complexes that form filaments, and can associate with cellular membranes, actin filaments and microtubules. GTPase activity is required for filament formation. Interacts with ADGB. In terms of processing, proteolytically cleaved in vitro in a calmodulin-dependent manner.

It is found in the cytoplasm. The protein localises to the cytoskeleton. It localises to the cell projection. Its subcellular location is the cilium. The protein resides in the flagellum. Its function is as follows. Filament-forming cytoskeletal GTPase. May play a role in cytokinesis (Potential). The chain is Septin-10 from Bos taurus (Bovine).